We begin with the raw amino-acid sequence, 87 residues long: Small ribosomal subunit protein bS18 (87 aa).

This sequence belongs to the bacterial ribosomal protein bS18 family. Part of the 30S ribosomal subunit. Forms a tight heterodimer with protein bS6.

Its function is as follows. Binds as a heterodimer with protein bS6 to the central domain of the 16S rRNA, where it helps stabilize the platform of the 30S subunit. In Sulfurimonas denitrificans (strain ATCC 33889 / DSM 1251) (Thiomicrospira denitrificans (strain ATCC 33889 / DSM 1251)), this protein is Small ribosomal subunit protein bS18.